We begin with the raw amino-acid sequence, 817 residues long: Leucine--tRNA ligase (817 aa).

Residues 42–52 carry the 'HIGH' region motif; it reads PYPSGRLHMGH. The 'KMSKS' region motif lies at 576 to 580; it reads KMSKS. K579 provides a ligand contact to ATP.

The protein belongs to the class-I aminoacyl-tRNA synthetase family.

It localises to the cytoplasm. It catalyses the reaction tRNA(Leu) + L-leucine + ATP = L-leucyl-tRNA(Leu) + AMP + diphosphate. This chain is Leucine--tRNA ligase, found in Thioalkalivibrio sulfidiphilus (strain HL-EbGR7).